The sequence spans 617 residues: Manganese lipoxygenase (617 aa).

The signal sequence occupies residues M1–A17. Residues G23–T48 are compositionally biased toward low complexity. The tract at residues G23 to P59 is disordered. Residues N109, N119, and N160 are each glycosylated (N-linked (GlcNAc...) asparagine). The Lipoxygenase domain occupies L122–I617. Residues H293, H297, H479, and N483 each contribute to the Mn(2+) site. The N-linked (GlcNAc...) asparagine glycan is linked to N547. I617 is a Mn(2+) binding site.

The protein belongs to the lipoxygenase family. Manganese lipoxygenase subfamily. Requires Mn(2+) as cofactor.

It localises to the secreted. The catalysed reaction is (9Z,12Z)-octadecadienoate + O2 = (9S)-hydroperoxy-(10E,12Z)-octadecadienoate. It catalyses the reaction (9Z,12Z)-octadecadienoate + O2 = (11S)-hydroperoxy-(9Z,12Z)-octadecadienoate. It carries out the reaction (9Z,12Z)-octadecadienoate + O2 = (13R)-hydroperoxy-(9Z,11E)-octadecadienoate. The enzyme catalyses (9Z,12Z,15Z)-octadecatrienoate + O2 = (9S)-hydroperoxy-(10E,12Z,15Z)-octadecatrienoate. The catalysed reaction is (9Z,12Z,15Z)-octadecatrienoate + O2 = (11R)-hydroperoxy-(9Z,12Z,15Z)-octadecatrienoate. It catalyses the reaction (9Z,12Z,15Z)-octadecatrienoate + O2 = (13R)-hydroperoxy-(9Z,11E,15Z)-octadecatrienoate. In terms of biological role, lipoxygenase that metabolizes linoleic and alpha-linolenic acids to 9S-, 11- and 13R-hydroperoxy fatty acids. At the end of lipoxygenation, the intermediate products 11S-HPODE and 13R-HPODE from linoleic acid are then transformed into 9S-HPODE as the final product. The intermediate product 11R-HPOTrE from alpha-linolenic acid is transformed into 9S-HPOTrE and 13R-HPOTrE as the final products. 9S-HPOTrE is further oxidized by the enzyme to 9,16-DiHOTrE as the end product. Also acts on gamma-linolenic acid producing 9-HOTrE(n-6) as the main metabolite. This Nakataea oryzae (Rice stem rot fungus) protein is Manganese lipoxygenase.